An 87-amino-acid polypeptide reads, in one-letter code: Translation initiation factor IF-1 2 (87 aa).

Positions 1-72 constitute an S1-like domain; that stretch reads MAKEELLELD…TKGRINFRHK (72 aa). A disordered region spans residues 68 to 87; it reads NFRHKDANSPRPPRSGQPRR. The segment covering 77–87 has biased composition (pro residues); the sequence is PRPPRSGQPRR.

This sequence belongs to the IF-1 family. In terms of assembly, component of the 30S ribosomal translation pre-initiation complex which assembles on the 30S ribosome in the order IF-2 and IF-3, IF-1 and N-formylmethionyl-tRNA(fMet); mRNA recruitment can occur at any time during PIC assembly.

The protein localises to the cytoplasm. Its function is as follows. One of the essential components for the initiation of protein synthesis. Stabilizes the binding of IF-2 and IF-3 on the 30S subunit to which N-formylmethionyl-tRNA(fMet) subsequently binds. Helps modulate mRNA selection, yielding the 30S pre-initiation complex (PIC). Upon addition of the 50S ribosomal subunit IF-1, IF-2 and IF-3 are released leaving the mature 70S translation initiation complex. The sequence is that of Translation initiation factor IF-1 2 from Burkholderia cenocepacia (strain HI2424).